We begin with the raw amino-acid sequence, 178 residues long: Large ribosomal subunit protein uL10 (178 aa).

It belongs to the universal ribosomal protein uL10 family. As to quaternary structure, part of the ribosomal stalk of the 50S ribosomal subunit. The N-terminus interacts with L11 and the large rRNA to form the base of the stalk. The C-terminus forms an elongated spine to which L12 dimers bind in a sequential fashion forming a multimeric L10(L12)X complex.

Functionally, forms part of the ribosomal stalk, playing a central role in the interaction of the ribosome with GTP-bound translation factors. The protein is Large ribosomal subunit protein uL10 of Albidiferax ferrireducens (strain ATCC BAA-621 / DSM 15236 / T118) (Rhodoferax ferrireducens).